The primary structure comprises 501 residues: L-arabinose isomerase (501 aa).

Glutamate 306, glutamate 333, histidine 350, and histidine 450 together coordinate Mn(2+).

Belongs to the arabinose isomerase family. In terms of assembly, homohexamer. The cofactor is Mn(2+).

It carries out the reaction beta-L-arabinopyranose = L-ribulose. The protein operates within carbohydrate degradation; L-arabinose degradation via L-ribulose; D-xylulose 5-phosphate from L-arabinose (bacterial route): step 1/3. In terms of biological role, catalyzes the conversion of L-arabinose to L-ribulose. This chain is L-arabinose isomerase, found in Pectobacterium atrosepticum (strain SCRI 1043 / ATCC BAA-672) (Erwinia carotovora subsp. atroseptica).